Reading from the N-terminus, the 464-residue chain is Glutamate--tRNA ligase (464 aa).

A 'HIGH' region motif is present at residues 9 to 19 (PSPTGYLHIGG). The 'KMSKS' region signature appears at 242-246 (KISKR). Lysine 245 provides a ligand contact to ATP.

This sequence belongs to the class-I aminoacyl-tRNA synthetase family. Glutamate--tRNA ligase type 1 subfamily. As to quaternary structure, monomer.

The protein localises to the cytoplasm. The enzyme catalyses tRNA(Glu) + L-glutamate + ATP = L-glutamyl-tRNA(Glu) + AMP + diphosphate. Its function is as follows. Catalyzes the attachment of glutamate to tRNA(Glu) in a two-step reaction: glutamate is first activated by ATP to form Glu-AMP and then transferred to the acceptor end of tRNA(Glu). The polypeptide is Glutamate--tRNA ligase (Neisseria gonorrhoeae (strain NCCP11945)).